We begin with the raw amino-acid sequence, 192 residues long: Ribose 1,5-bisphosphate phosphokinase PhnN (192 aa).

15–22 (GPSGAGKD) contacts ATP.

This sequence belongs to the ribose 1,5-bisphosphokinase family.

It catalyses the reaction alpha-D-ribose 1,5-bisphosphate + ATP = 5-phospho-alpha-D-ribose 1-diphosphate + ADP. It functions in the pathway metabolic intermediate biosynthesis; 5-phospho-alpha-D-ribose 1-diphosphate biosynthesis; 5-phospho-alpha-D-ribose 1-diphosphate from D-ribose 5-phosphate (route II): step 3/3. Catalyzes the phosphorylation of ribose 1,5-bisphosphate to 5-phospho-D-ribosyl alpha-1-diphosphate (PRPP). This is Ribose 1,5-bisphosphate phosphokinase PhnN from Brucella melitensis biotype 2 (strain ATCC 23457).